Reading from the N-terminus, the 536-residue chain is G-protein coupled receptor Mth2 (536 aa).

Intrachain disulfides connect Cys17–Cys71, Cys73–Cys78, Cys82–Cys177, Cys83–Cys96, and Cys138–Cys197. Asn24 and Asn33 each carry an N-linked (GlcNAc...) asparagine glycan. Asn103, Asn113, Asn118, Asn159, and Asn184 each carry an N-linked (GlcNAc...) asparagine glycan. The helical transmembrane segment at 212–232 threads the bilayer; the sequence is YAMMFSIPFMMLTIAVYLLIP. Residues 233 to 241 are Cytoplasmic-facing; it reads ELRNQHGKS. A helical transmembrane segment spans residues 242–262; sequence LVCYLIGLTVGYSSLCYVQLY. Over 263–273 the chain is Extracellular; sequence QVDATGVTCKV. A helical transmembrane segment spans residues 274–294; that stretch reads FGYTAYFFFMGAYMWLSVISF. At 295–314 the chain is on the cytoplasmic side; it reads DLWHNFRGTRGINRFQEKKR. The helical transmembrane segment at 315–335 threads the bilayer; sequence FLFYSLYSWGIALVFLAFTYC. Over 336 to 365 the chain is Extracellular; sequence AQQLSNLPDNLKPGIGDGVYCWLDMSNWAA. Residues 366–386 form a helical membrane-spanning segment; the sequence is MIYFYGPILAIVVANTIMFIM. The Cytoplasmic segment spans residues 387-417; it reads TAIKIHGVQREMARIIASENSTKNLRTEKDK. A helical membrane pass occupies residues 418–438; it reads FGLFLRLFLIMGITWLTELIS. Residues 439-449 are Extracellular-facing; the sequence is YFVGSDKGWSK. A helical membrane pass occupies residues 450–470; it reads LFYISDLANAMQGFLIFMLFV. Residues 471–536 lie on the Cytoplasmic side of the membrane; the sequence is MKKKVKHLIT…VDPQKTTIFR (66 aa). The tract at residues 487 to 506 is disordered; it reads RDGSNQRQSQYSTKTTSSSV. A compositionally biased stretch (low complexity) spans 492–505; sequence QRQSQYSTKTTSSS.

Belongs to the G-protein coupled receptor 2 family. Mth subfamily. As to quaternary structure, homodimer.

Its subcellular location is the cell membrane. Functionally, involved in biological aging and stress response. Essential for adult survival. The chain is G-protein coupled receptor Mth2 (mth2) from Drosophila simulans (Fruit fly).